Reading from the N-terminus, the 172-residue chain is GTP-dependent dephospho-CoA kinase (172 aa).

GTP contacts are provided by aspartate 49, valine 50, valine 51, aspartate 68, lysine 70, and glutamate 120.

The protein belongs to the GTP-dependent DPCK family.

It carries out the reaction 3'-dephospho-CoA + GTP = GDP + CoA + H(+). The protein operates within cofactor biosynthesis; coenzyme A biosynthesis. Catalyzes the GTP-dependent phosphorylation of the 3'-hydroxyl group of dephosphocoenzyme A to form coenzyme A (CoA). The protein is GTP-dependent dephospho-CoA kinase of Pyrobaculum arsenaticum (strain DSM 13514 / JCM 11321 / PZ6).